The sequence spans 285 residues: tRNA (adenine(58)-N(1))-methyltransferase catalytic subunit TRMT61A (285 aa).

Residue Ser2 is modified to N-acetylserine. Substrate regions lie at residues 20-22 (LGH), 35-42 (QTQTRHGV), 64-65 (GW), 85-89 (QILYS), and 110-117 (SGTGSGSV). S-adenosyl-L-methionine contacts are provided by residues Leu87, 114-116 (SGS), Glu135, Arg140, 163-164 (DV), and Asp181. Substrate stretches follow at residues 180–183 (LDIP) and 205–212 (SFSPCIEQ). Thr274 contributes to the substrate binding site.

It belongs to the class I-like SAM-binding methyltransferase superfamily. TRM61 family. Heterotetramer; composed of two copies of TRMT6 and two copies of TRMT61A.

The protein localises to the nucleus. The catalysed reaction is adenosine(58) in tRNA + S-adenosyl-L-methionine = N(1)-methyladenosine(58) in tRNA + S-adenosyl-L-homocysteine + H(+). It carries out the reaction an adenosine in mRNA + S-adenosyl-L-methionine = an N(1)-methyladenosine in mRNA + S-adenosyl-L-homocysteine + H(+). Functionally, catalytic subunit of tRNA (adenine-N(1)-)-methyltransferase, which catalyzes the formation of N(1)-methyladenine at position 58 (m1A58) in initiator methionyl-tRNA. Catalytic subunit of mRNA N(1)-methyltransferase complex, which mediates methylation of adenosine residues at the N(1) position of a small subset of mRNAs: N(1) methylation takes place in tRNA T-loop-like structures of mRNAs and is only present at low stoichiometries. This is tRNA (adenine(58)-N(1))-methyltransferase catalytic subunit TRMT61A (TRMT61A) from Bos taurus (Bovine).